Consider the following 293-residue polypeptide: 4-diphosphocytidyl-2-C-methyl-D-erythritol kinase (293 aa).

Lys16 is a catalytic residue. 99–109 (PMGAGLGGGSS) is an ATP binding site. Residue Asp141 is part of the active site.

It belongs to the GHMP kinase family. IspE subfamily.

The catalysed reaction is 4-CDP-2-C-methyl-D-erythritol + ATP = 4-CDP-2-C-methyl-D-erythritol 2-phosphate + ADP + H(+). It functions in the pathway isoprenoid biosynthesis; isopentenyl diphosphate biosynthesis via DXP pathway; isopentenyl diphosphate from 1-deoxy-D-xylulose 5-phosphate: step 3/6. Catalyzes the phosphorylation of the position 2 hydroxy group of 4-diphosphocytidyl-2C-methyl-D-erythritol. This Burkholderia mallei (strain NCTC 10247) protein is 4-diphosphocytidyl-2-C-methyl-D-erythritol kinase.